Consider the following 2832-residue polypeptide: Cyclic beta-(1,2)-glucan synthase NdvB (2832 aa).

Helical transmembrane passes span 411 to 431 (FAIA…VYAF), 444 to 464 (IMLL…FNTV), 810 to 830 (LIPV…EPTP), 831 to 851 (ALIW…LSLI), 880 to 900 (QVAL…DAIV), 938 to 958 (WTAP…DTGL), and 959 to 979 (PFIG…AWFV). The Glycoamylase-like domain maps to 1299-1506 (LASEARLTSL…NGQLREWFHA (208 aa)).

Belongs to the NdvB family.

Its subcellular location is the cell inner membrane. The catalysed reaction is [(1-&gt;2)-beta-D-glucosyl](n) + UDP-alpha-D-glucose = [(1-&gt;2)-beta-D-glucosyl](n+1) + UDP + H(+). Its function is as follows. Involved in the biosynthesis of cyclic beta-(1,2)-glucan. It seems that NdvB is involved in three enzymatic activities. First, it may catalyze the transfer of the first glucose from UDP-Glc to an unknown amino acid. In the second enzymatic activity (UDP-Glc:beta-(1,2) oligosaccharide glucosyltransferase), it may be responsible for chain elongation. Finally, in the third activity, it may catalyze glucan cyclization and release from the protein. NdvB is also involved in nodule invasion and in bacteroid development. In Rhizobium meliloti (strain 1021) (Ensifer meliloti), this protein is Cyclic beta-(1,2)-glucan synthase NdvB.